We begin with the raw amino-acid sequence, 354 residues long: UPF0597 protein PPA0217 (354 aa).

Belongs to the UPF0597 family.

This Cutibacterium acnes (strain DSM 16379 / KPA171202) (Propionibacterium acnes) protein is UPF0597 protein PPA0217.